A 450-amino-acid chain; its full sequence is BAG family molecular chaperone regulator 5 (450 aa).

BAG domains are found at residues Ser-9 to Ala-86, Glu-95 to Ala-167, Ser-182 to Glu-260, Ser-275 to Glu-350, and Glu-365 to Asp-442.

As to quaternary structure, binds to the ATPase domain of HSP/HSC70 chaperones.

In terms of biological role, co-chaperone for HSP/HSP70 proteins. It functions as a nucleotide-exchange factor promoting the release of ADP from HSP70, thereby activating HSP70-mediated protein refolding. The polypeptide is BAG family molecular chaperone regulator 5 (BAG5) (Gallus gallus (Chicken)).